Reading from the N-terminus, the 121-residue chain is Large ribosomal subunit protein uL18 (121 aa).

This sequence belongs to the universal ribosomal protein uL18 family. In terms of assembly, part of the 50S ribosomal subunit; part of the 5S rRNA/L5/L18/L25 subcomplex. Contacts the 5S and 23S rRNAs.

Its function is as follows. This is one of the proteins that bind and probably mediate the attachment of the 5S RNA into the large ribosomal subunit, where it forms part of the central protuberance. The sequence is that of Large ribosomal subunit protein uL18 from Ehrlichia chaffeensis (strain ATCC CRL-10679 / Arkansas).